A 296-amino-acid chain; its full sequence is MKTKIINLVVVTGMSGAGKTVAIQSFEDIGYFTIDNIPPSLVPKVIELLKHSEETDKIALVVDMRSRVFFDEINDILDQLESNEKLNFKILFLDATDGELVSRYKETRRSHPLAADGRVLDGIKLERELLSPLKSLSQNVVDTTKLTPRQLRKAISEQFSSKQDQSSFRIEVLSFGFKYGLPLDADLVFDVRFLPNPYYDPTLRNLTGLDKEVYDFVMTHKESEDFYKNLNHLIKPILPGYQKEGKSVLTIAVGCTGGQHRSVAFAHRLAQDLKNDWTVNETHRDKDRRKETVNRS.

13 to 20 (GMSGAGKT) lines the ATP pocket. Residue 63–66 (DMRS) coordinates GTP.

It belongs to the RapZ-like family.

In terms of biological role, displays ATPase and GTPase activities. The protein is Nucleotide-binding protein str0831 of Streptococcus thermophilus (strain CNRZ 1066).